The chain runs to 423 residues: COP9 signalosome complex subunit 3 (423 aa).

The PCI domain occupies 197-365; that stretch reads NFERAMYFYE…GMVCFHDSPE (169 aa). Residues 401 to 410 are compositionally biased toward polar residues; sequence PQFVQKSMGS. Positions 401-423 are disordered; sequence PQFVQKSMGSQEDDSGSKPSSYS.

Belongs to the CSN3 family. Component of the CSN complex, probably composed of cops1, cops2, cops3, cops4, cops5, cops6, cops7, cops8 and cops9.

Its subcellular location is the cytoplasm. It is found in the nucleus. Functionally, component of the COP9 signalosome complex (CSN), a complex involved in various cellular and developmental processes. The CSN complex is an essential regulator of the ubiquitin (Ubl) conjugation pathway by mediating the deneddylation of the cullin subunits of E3 ligase complexes, leading to modify the Ubl ligase activity. This chain is COP9 signalosome complex subunit 3 (cops3), found in Xenopus laevis (African clawed frog).